Reading from the N-terminus, the 210-residue chain is Superoxide dismutase [Mn], mitochondrial (210 aa).

Residues His29, His77, Asp163, and His167 each contribute to the Mn(2+) site.

This sequence belongs to the iron/manganese superoxide dismutase family. As to quaternary structure, homotetramer. It depends on Mn(2+) as a cofactor.

It localises to the mitochondrion matrix. It catalyses the reaction 2 superoxide + 2 H(+) = H2O2 + O2. Its function is as follows. Destroys superoxide anion radicals which are normally produced within the cells and which are toxic to biological systems. In Aspergillus fumigatus (strain ATCC MYA-4609 / CBS 101355 / FGSC A1100 / Af293) (Neosartorya fumigata), this protein is Superoxide dismutase [Mn], mitochondrial (sodB).